The following is a 22-amino-acid chain: Mu-conotoxin GIIIC (22 aa).

Disulfide bonds link Cys3-Cys15, Cys4-Cys20, and Cys10-Cys21. 4-hydroxyproline is present on residues Pro6, Pro7, and Pro17. Ala22 carries the alanine amide modification.

Belongs to the conotoxin M superfamily. As to expression, expressed by the venom duct.

The protein localises to the secreted. In terms of biological role, mu-conotoxins block voltage-gated sodium channels (Nav). This toxin shows potent activity on Nav1.4/SCN4A (IC(50)=286 nM), and weak activity on mNav1.6/SCN8A. The chain is Mu-conotoxin GIIIC from Conus geographus (Geography cone).